Reading from the N-terminus, the 401-residue chain is DNA damage checkpoint control protein RAD17 (401 aa).

The disordered stretch occupies residues 367 to 393 (KKIKLPSEEENNKNRESEDEENHCKYP). Basic and acidic residues predominate over residues 371-393 (LPSEEENNKNRESEDEENHCKYP). Residue S383 is modified to Phosphoserine.

This sequence belongs to the rad1 family. Component of the checkpoint clamp complex composed of DDC1, MEC3 and RAD17. The interaction with MEC3 is performed in a RAD17-dependent manner. The checkpoint clamp complex loads onto DNA. Interacts with the DNA polymerase zeta subunit REV7. 2 RAD17 subunits also form a heterotrimer with one MEC3 subunit.

It localises to the nucleus. Component of the checkpoint clamp complex involved in the surveillance mechanism that allows the DNA repair pathways to act to restore the integrity of the DNA prior to DNA synthesis or separation of the replicated chromosomes. Associates with sites of DNA damage and modulates the MEC1 signaling pathway and the activation of RAD53 in response to DNA damage at phase G1. The complex also physically regulates DNA polymerase zeta-dependent mutagenesis by controlling the access of polymerase zeta to damaged DNA. Contrary to its human counterpart, the 9-1-1 complex, the checkpoint clamp complex shows no detectable exonuclease activity. The sequence is that of DNA damage checkpoint control protein RAD17 (RAD17) from Saccharomyces cerevisiae (strain ATCC 204508 / S288c) (Baker's yeast).